The following is a 130-amino-acid chain: Small ribosomal subunit protein uS9 (130 aa).

This sequence belongs to the universal ribosomal protein uS9 family.

The polypeptide is Small ribosomal subunit protein uS9 (Shewanella halifaxensis (strain HAW-EB4)).